The chain runs to 475 residues: MSPQTETKASVGFKAGVKDYRLTYYTPEYETLDTDILAAFRVTPQPGVPPEEAGAAVAAESSTGTWTSVWTDGLTSLDRYKGRCYNIEPVAGEENQYICYVAYPLDLFEEGSVTNMFTSIVGNVFGFKALRALRLEDLRIPVAYVKTFQGPPHGIQVERDKLNKYGRPLLGCTIKPKLGLSAKNYGRACYECLRGGLDFTKDDENVNSQPFMRWRDRFLFCAEAIYKSQAETGEIKGHYLNATAGTCEEMIKRAVFARELGVPIVMHDYLTGGFTANTSLSQYCRDNGLLLHIHRAMHAVIDRQKNHGMHFRVLAKALRLSGGDHIHSGTVVGKLEGERDITLGFVDLLRDDYTEKDRSRGIFFTQSWVSTPGVLPVASGGIHVWHMPALTEIFGDDSVLQFGGGTLGHPWGNAPGAVANRVALEACVQARNEGRDLAREGNTIIREAAKWSPELAAACEVWKEIKFEFPAMDTI.

The propeptide occupies 1–2 (MS). At Pro-3 the chain carries N-acetylproline. Lys-14 is modified (N6,N6,N6-trimethyllysine). Residues Asn-123 and Thr-173 each coordinate substrate. Lys-175 acts as the Proton acceptor in catalysis. Substrate is bound at residue Lys-177. Lys-201, Asp-203, and Glu-204 together coordinate Mg(2+). The residue at position 201 (Lys-201) is an N6-carboxylysine. His-294 functions as the Proton acceptor in the catalytic mechanism. Positions 295, 327, and 379 each coordinate substrate.

Belongs to the RuBisCO large chain family. Type I subfamily. Heterohexadecamer of 8 large chains and 8 small chains; disulfide-linked. The disulfide link is formed within the large subunit homodimers. Mg(2+) is required as a cofactor. In terms of processing, the disulfide bond which can form in the large chain dimeric partners within the hexadecamer appears to be associated with oxidative stress and protein turnover.

The protein resides in the plastid. Its subcellular location is the chloroplast. The catalysed reaction is 2 (2R)-3-phosphoglycerate + 2 H(+) = D-ribulose 1,5-bisphosphate + CO2 + H2O. It catalyses the reaction D-ribulose 1,5-bisphosphate + O2 = 2-phosphoglycolate + (2R)-3-phosphoglycerate + 2 H(+). RuBisCO catalyzes two reactions: the carboxylation of D-ribulose 1,5-bisphosphate, the primary event in carbon dioxide fixation, as well as the oxidative fragmentation of the pentose substrate in the photorespiration process. Both reactions occur simultaneously and in competition at the same active site. The protein is Ribulose bisphosphate carboxylase large chain of Amaranthus tricolor (Joseph's coat).